The sequence spans 156 residues: Large ribosomal subunit protein eL24 (156 aa).

A compositionally biased stretch (basic and acidic residues) spans 110 to 123 (RAAKEKQKQKELEK). The interval 110-156 (RAAKEKQKQKELEKKAKKVEKKKPTLAPKQKAAKITQKPAPRVGGKR) is disordered.

This sequence belongs to the eukaryotic ribosomal protein eL24 family.

In Schistosoma japonicum (Blood fluke), this protein is Large ribosomal subunit protein eL24 (RPL24).